The primary structure comprises 53 residues: Conotoxin Vc5.3 (53 aa).

A signal peptide spans V1–A15. A propeptide spanning residues R16–R41 is cleaved from the precursor.

The protein belongs to the conotoxin T superfamily. Post-translationally, contains 2 disulfide bonds that can be either 'C1-C3, C2-C4' or 'C1-C4, C2-C3', since these disulfide connectivities have been observed for conotoxins with cysteine framework V (for examples, see AC P0DQQ7 and AC P81755). As to expression, expressed by the venom duct.

Its subcellular location is the secreted. This Conus victoriae (Queen Victoria cone) protein is Conotoxin Vc5.3.